The chain runs to 422 residues: MTAPRRRITLAGIIDGPGGHVAAWRHPATKADAQLDFEFHRDNARTLERGLFDAVFIADIVAVWGTRLDSLCRTSRTEHFEPLTLLAAYAAVTEHIGLCATATTTYNEPAHIAARFASLDHLSGGRAGWNVVTSAAPWESANFGFPEHLEHGKRYERAEEFIDVVKKLWDSDGRPVDHRGTHFEAPGPLGIARPPQGRPVIIQAGSSPVGREFAARHAEVIFTRHNRLSDAQDFYGDLKARVARHGRDPEKVLVWPTLAPIVAATDTEAKQRLQELQDLTHDHVALRTLQDHLGDVDLSAYPIDGPVPDIPYTNQSQSTTERLIGLARRENLSIRELALRLMGDIVVGTPEQLADHMESWFTGRGADGFNIDFPYLPGSADDFVDHVVPELQRRGLYRSGYEGTTLRANLGIDAPRKAGAAA.

Residues aspartate 59, threonine 101, histidine 151, tyrosine 155, serine 206, and serine 207 each coordinate FMN.

The protein belongs to the NtaA/SnaA/DszA monooxygenase family. As to quaternary structure, heterodimer of two subunits, SnaA and SnaB. It depends on FMN as a cofactor.

Catalyzes the oxidation of the proline residue of pristinamycin IIB (PIIB) to pristinamycin IIA (PIIA). This chain is Pristinamycin IIA synthase subunit A (snaA), found in Streptomyces pristinaespiralis.